We begin with the raw amino-acid sequence, 488 residues long: Annexin A7 (488 aa).

Residues 1–18 show a composition bias toward pro residues; sequence MSYPGYPPTGYPPFPGYP. 2 disordered regions span residues 1–49 and 71–143; these read MSYP…YPQV and GYPG…PTYP. Residues 1-143 form a repeat-rich region region; it reads MSYPGYPPTG…QYPGGQPTYP (143 aa). Residues 5 to 20 form a 3 X 5 AA tandem repeats of G-Y-P-P-X region; the sequence is GYPPTGYPPFPGYPPA. Residues 89-102 show a composition bias toward gly residues; the sequence is PGQGFGVPPGGAGF. Annexin repeat units lie at residues 185–256, 257–328, 340–412, and 416–487; these read FDAI…ALFM, PPTY…SMCQ, QMAQ…TILQ, and NRPA…AIVG. K233 carries the N6-acetyllysine modification.

The protein belongs to the annexin family. In terms of assembly, interacts with PDCD6. As to expression, isoform 1 is expressed in brain, heart and skeletal muscle. Isoform 2 is more abundant in liver, lung, kidney, spleen, fibroblasts and placenta.

In terms of biological role, calcium/phospholipid-binding protein which promotes membrane fusion and is involved in exocytosis. The polypeptide is Annexin A7 (ANXA7) (Homo sapiens (Human)).